The sequence spans 599 residues: Elongation factor 4 (599 aa).

One can recognise a tr-type G domain in the interval 2-185 (ENIRNFSIIA…AITKRIPPPK (184 aa)). GTP is bound by residues 14-19 (DHGKST) and 132-135 (NKID).

This sequence belongs to the TRAFAC class translation factor GTPase superfamily. Classic translation factor GTPase family. LepA subfamily.

The protein resides in the cell inner membrane. The catalysed reaction is GTP + H2O = GDP + phosphate + H(+). In terms of biological role, required for accurate and efficient protein synthesis under certain stress conditions. May act as a fidelity factor of the translation reaction, by catalyzing a one-codon backward translocation of tRNAs on improperly translocated ribosomes. Back-translocation proceeds from a post-translocation (POST) complex to a pre-translocation (PRE) complex, thus giving elongation factor G a second chance to translocate the tRNAs correctly. Binds to ribosomes in a GTP-dependent manner. The sequence is that of Elongation factor 4 from Hydrogenobaculum sp. (strain Y04AAS1).